A 1551-amino-acid polypeptide reads, in one-letter code: Pentafunctional AROM polypeptide (1551 aa).

The 3-dehydroquinate synthase stretch occupies residues 1 to 379; sequence MSIEKVPILG…YQLKAHEVSK (379 aa). NAD(+) contacts are provided by residues 42–44, 80–83, 111–113, and aspartate 116; these read DTN, ENNK, and GGV. Arginine 127 serves as a coordination point for 7-phospho-2-dehydro-3-deoxy-D-arabino-heptonate. 136–137 contributes to the NAD(+) binding site; that stretch reads TT. 2 residues coordinate 7-phospho-2-dehydro-3-deoxy-D-arabino-heptonate: aspartate 143 and lysine 149. Lysine 158 contacts NAD(+). Asparagine 159 is a binding site for 7-phospho-2-dehydro-3-deoxy-D-arabino-heptonate. NAD(+) is bound by residues 176–179 and asparagine 187; that span reads YLES. Glutamate 191 is a Zn(2+) binding site. 7-phospho-2-dehydro-3-deoxy-D-arabino-heptonate is bound by residues 191–194 and lysine 243; that span reads EVVK. Residue glutamate 253 is the Proton acceptor; for 3-dehydroquinate synthase activity of the active site. 7-phospho-2-dehydro-3-deoxy-D-arabino-heptonate is bound by residues 257 to 261 and histidine 264; that span reads RNLLN. Histidine 264 is a binding site for Zn(2+). The Proton acceptor; for 3-dehydroquinate synthase activity role is filled by histidine 268. 2 residues coordinate 7-phospho-2-dehydro-3-deoxy-D-arabino-heptonate: histidine 280 and lysine 351. Histidine 280 is a binding site for Zn(2+). An EPSP synthase region spans residues 392-838; that stretch reads VHPFKQPPQE…WDILHSKFNI (447 aa). A shikimate kinase region spans residues 858–1048; it reads DKSIIIIGMR…IPSGRSAALS (191 aa). 865–872 contacts ATP; the sequence is GMRGTGKS. Residues 1049–1258 form a 3-dehydroquinase region; that stretch reads LTVPDLNAIS…NEDGLLTIKE (210 aa). Lysine 1194 functions as the Schiff-base intermediate with substrate; for 3-dehydroquinate dehydratase activity in the catalytic mechanism. Residues 1271–1551 are shikimate dehydrogenase; sequence AKKFWVIGSP…DVIHRAVVEE (281 aa).

This sequence in the N-terminal section; belongs to the sugar phosphate cyclases superfamily. Dehydroquinate synthase family. The protein in the 2nd section; belongs to the EPSP synthase family. In the 3rd section; belongs to the shikimate kinase family. It in the 4th section; belongs to the type-I 3-dehydroquinase family. This sequence in the C-terminal section; belongs to the shikimate dehydrogenase family. As to quaternary structure, homodimer. It depends on Zn(2+) as a cofactor.

The protein resides in the cytoplasm. It catalyses the reaction 7-phospho-2-dehydro-3-deoxy-D-arabino-heptonate = 3-dehydroquinate + phosphate. It carries out the reaction 3-dehydroquinate = 3-dehydroshikimate + H2O. The enzyme catalyses shikimate + NADP(+) = 3-dehydroshikimate + NADPH + H(+). The catalysed reaction is shikimate + ATP = 3-phosphoshikimate + ADP + H(+). It catalyses the reaction 3-phosphoshikimate + phosphoenolpyruvate = 5-O-(1-carboxyvinyl)-3-phosphoshikimate + phosphate. Its pathway is metabolic intermediate biosynthesis; chorismate biosynthesis; chorismate from D-erythrose 4-phosphate and phosphoenolpyruvate: step 2/7. It functions in the pathway metabolic intermediate biosynthesis; chorismate biosynthesis; chorismate from D-erythrose 4-phosphate and phosphoenolpyruvate: step 3/7. The protein operates within metabolic intermediate biosynthesis; chorismate biosynthesis; chorismate from D-erythrose 4-phosphate and phosphoenolpyruvate: step 4/7. It participates in metabolic intermediate biosynthesis; chorismate biosynthesis; chorismate from D-erythrose 4-phosphate and phosphoenolpyruvate: step 5/7. Its pathway is metabolic intermediate biosynthesis; chorismate biosynthesis; chorismate from D-erythrose 4-phosphate and phosphoenolpyruvate: step 6/7. The AROM polypeptide catalyzes 5 consecutive enzymatic reactions in prechorismate polyaromatic amino acid biosynthesis. The protein is Pentafunctional AROM polypeptide of Candida tropicalis (strain ATCC MYA-3404 / T1) (Yeast).